The primary structure comprises 277 residues: Transcription factor HES-4-B (277 aa).

The interval 1–44 is disordered; that stretch reads MPADSMEKPTASPIAGAPANSAQTPDKPKSASEHRKSSKPIMEK. Residues 26 to 35 are compositionally biased toward basic and acidic residues; that stretch reads DKPKSASEHR. The 58-residue stretch at 34–91 folds into the bHLH domain; sequence HRKSSKPIMEKRRRARINESLGQLKTLILDALKKDSSRHSKLEKADILEMTVKHLRNL. The 34-residue stretch at 110–143 folds into the Orange domain; the sequence is YRAGFNECMNEVTRFLSTCEGVNTEVRTRLLGHL. The tract at residues 258–277 is disordered; the sequence is VSPLGGSTRADSAESVWRPW. Positions 274 to 277 match the WRPW motif motif; sequence WRPW.

Transcription repression requires formation of a complex with a corepressor protein of the Groucho/TLE family. Interacts with the bHLH protein hes6; this interaction may inhibit the transcriptional repressor activity. Binds DNA in the form of a heterodimer with the bHLH protein hey1/hrt1. Interacts (via Orange domain) with id3 (via HLH domain). Dynamically expressed in the borders of several tissue territories. Expressed in the pre-placodal ectoderm (PPE) from gastrula stage. During gastrulation, expressed in the deep layer of the dorsal lip, the Spemann organizer and three distinct regions in the prospective neuroectoderm: neural plate border, presumptive floor plate/notoplate and anterior neural plate. At later stages, expression is localized to the anterior of the prechordal plate, the presomitic mesoderm, neural tube, neural crest derivatives and several tissues of the central nervous system, with expression in the developing floor plate continues to at least the tadpole stage. From the early tailbud stage, expressed in the dorsoanterior region of the developing pronephros. During early tailbud stages, broadly expressed within the pronephric mesoderm. and in the sensorial layer of the ectoderm covering the pronephros anlagen. During late tailbud to early tadpole stages, expressed in the ventral region of the pronephros. Expression remains in the proximal and distal tubules at late tadpole stages (stage 35).

The protein resides in the nucleus. Its function is as follows. Transcriptional repressor. Binds DNA on N-box motifs: 5'-CACNAG-3'. Promotes floor plate development and prechordal plate development. Required for lens development as early as the stage of lens field formation, partly through regulation of gene expression of the cell cycle inhibitor cdknx/p27(xic1). Required for formation of the neural crest downstream of multiple signaling pathways, and acts at the neural plate border via both DNA-binding dependent and independent mechanisms; acts in a DNA-binding dependent manner to repress pro-apoptotic and neural crest differentiation genes, including id3, delta1, and cdknx/p27(xic1), and thus promote the cell survival of neural plate border cells and maintain them in an undifferentiated state. Represses transcription of id3, at least in part through the repression of bmp4. On the other hand, acts in a DNA-independent manner separate from the transcriptional repressor function, to stimulate cell proliferation and promote neural crest formation. Via this DNA-independent route, acts in neurulae upstream of stat3 to transiently up-regulate the notch ligand dll1/delta1, which in turn up-regulates id3 expression. Then interacts directly with id3, which blocks the transcriptional repressor function of hes4-B/hairy2b to allow the progression of neural crest progenitors through specification and differentiation. Also acts via repressor-dependent and repressor-independent mechanisms in early gastrulae to establish the prospective anterior prechordal mesoderm identity in the Spemann organizer; induces specific genes independently from direct transcriptional regulation, and represses the genes specific for neighboring tissues through direct transcriptional repression. Modulates lateral inhibition during notch signaling and regulates the cell context dependent effects of notch (which can have inhibitory, permissive or enhancing roles in muscle or neural differentiation). Inhibits myogenesis. The polypeptide is Transcription factor HES-4-B (hes4-b) (Xenopus laevis (African clawed frog)).